The primary structure comprises 149 residues: Protein-export protein SecB 2 (149 aa).

This sequence belongs to the SecB family. Homotetramer, a dimer of dimers. One homotetramer interacts with 1 SecA dimer.

The protein localises to the cytoplasm. One of the proteins required for the normal export of preproteins out of the cell cytoplasm. It is a molecular chaperone that binds to a subset of precursor proteins, maintaining them in a translocation-competent state. It also specifically binds to its receptor SecA. The chain is Protein-export protein SecB 2 from Francisella tularensis subsp. tularensis (strain FSC 198).